The following is a 1054-amino-acid chain: MTGIGEMFLAAFLQALFQTLVSEPFRSFFKRRELNENLLERLSTALLTITAVLIDAEEKQITNPVVEKWVNELRDVVYHAEDALDDIATEALRLNIGAESSSSNRLRQLRGRMSLGDFLDGNSEHLETRLEKVTIRLERLASQRNILGLKELTAMIPKQRLPTTSLVDESEVFGRDDDKDEIMRFLIPENGKDNGITVVAIVGIGGVGKTTLSQLLYNDQHVRSYFGTKVWAHVSEEFDVFKITKKVYESVTSRPCEFTDLDVLQVKLKERLTGTGLPFLLVLDDLWNENFADWDLLRQPFIHAAQGSQILVTTRSQRVASIMCAVHVHNLQPLSDGDCWSLFMKTVFGNQEPCLNREIGDLAERIVHKCRGLPLAVKTLGGVLRFEGKVIEWERVLSSRIWDLPADKSNLLPVLRVSYYYLPAHLKRCFAYCSIFPKGHAFEKDKVVLLWMAEGFLQQTRSSKNLEELGNEYFSELESRSLLQKTKTRYIMHDFINELAQFASGEFSSKFEDGCKLQVSERTRYLSYLRDNYAEPMEFEALREVKFLRTFLPLSLTNSSRSCCLDQMVSEKLLPTLTRLRVLSLSHYKIARLPPDFFKNISHARFLDLSRTELEKLPKSLCYMYNLQTLLLSYCSSLKELPTDISNLINLRYLDLIGTKLRQMPRRFGRLKSLQTLTTFFVSASDGSRISELGGLHDLHGKLKIVELQRVVDVADAAEANLNSKKHLREIDFVWRTGSSSSENNTNPHRTQNEAEVFEKLRPHRHIEKLAIERYKGRRFPDWLSDPSFSRIVCIRLRECQYCTSLPSLGQLPCLKELHISGMVGLQSIGRKFYFSDQQLRDQDQQPFRSLETLRFDNLPDWQEWLDVRVTRGDLFPSLKKLFILRCPELTGTLPTFLPSLISLHIYKCGLLDFQPDHHEYSYRNLQTLSIKSSCDTLVKFPLNHFANLDKLEVDQCTSLYSLELSNEHLRGPNALRNLRINDCQNLQLLPKLNALPQNLQVTITNCRYLRQPMEQQPQYHHPQFHLPRSNVSGSPKSHGSHRSYDSRSSSRYD.

Leucine-zipper stretches follow at residues 9–20 (LAAFLQALFQTL) and 39–53 (LERL…TAVL). Residues 117–147 (DFLDGNSEHLETRLEKVTIRLERLASQRNIL) are a coiled coil. The NB-ARC domain maps to 152 to 462 (LTAMIPKQRL…AEGFLQQTRS (311 aa)). 203-210 (GIGGVGKT) serves as a coordination point for ATP. 5 LRR repeats span residues 579–600 (RLRV…FFKN), 603–624 (HARF…LCYM), 626–648 (NLQT…ISNL), 650–672 (NLRY…GRLK), and 676–697 (TLTT…GGLH). Positions 1018–1054 (PQYHHPQFHLPRSNVSGSPKSHGSHRSYDSRSSSRYD) are disordered. A compositionally biased stretch (basic and acidic residues) spans 1043 to 1054 (RSYDSRSSSRYD).

Belongs to the disease resistance NB-LRR family. RPP13 subfamily.

Functionally, potential disease resistance protein. This chain is Putative disease resistance RPP13-like protein 1 (RPPL1), found in Arabidopsis thaliana (Mouse-ear cress).